Reading from the N-terminus, the 112-residue chain is Reprimo-like protein (112 aa).

The chain crosses the membrane as a helical span at residues 59-79 (VVQIAVLCVLSLTVLFGIFFL).

The protein belongs to the reprimo family.

Its subcellular location is the membrane. This is Reprimo-like protein (rprml) from Xenopus laevis (African clawed frog).